Here is a 1902-residue protein sequence, read N- to C-terminus: PII-type proteinase (1902 aa).

The N-terminal stretch at Met-1–Ala-33 is a signal peptide. Positions Ala-34–Thr-187 are excised as a propeptide. The Peptidase S8 domain maps to Ala-191–Ile-697. Catalysis depends on charge relay system residues Asp-217, His-281, and Ser-620. Residues Gly-1796 to Thr-1874 form a disordered region. Gly residues predominate over residues Lys-1797–Gly-1812. The span at Ser-1830–Ala-1843 shows a compositional bias: polar residues. Residues Leu-1867–Gly-1871 carry the LPXTG sorting signal motif. Pentaglycyl murein peptidoglycan amidated threonine is present on Thr-1870. A propeptide spans Gly-1871–Glu-1902 (removed by sortase).

The protein belongs to the peptidase S8 family.

The protein localises to the secreted. The protein resides in the cell wall. The enzyme catalyses Endopeptidase activity with very broad specificity, although some subsite preference have been noted, e.g. large hydrophobic residues in the P1 and P4 positions, and Pro in the P2 position. Best known for its action on caseins, although it has been shown to hydrolyze hemoglobin and oxidized insulin B-chain.. In terms of biological role, protease which breaks down milk proteins during the growth of the bacteria on milk. In Lactococcus lactis subsp. cremoris (Streptococcus cremoris), this protein is PII-type proteinase (prt).